The primary structure comprises 355 residues: Uroporphyrinogen decarboxylase (355 aa).

Residues 27 to 31, aspartate 78, tyrosine 155, serine 210, and histidine 328 contribute to the substrate site; that span reads RQAGR.

The protein belongs to the uroporphyrinogen decarboxylase family. Homodimer.

The protein resides in the cytoplasm. It carries out the reaction uroporphyrinogen III + 4 H(+) = coproporphyrinogen III + 4 CO2. Its pathway is porphyrin-containing compound metabolism; protoporphyrin-IX biosynthesis; coproporphyrinogen-III from 5-aminolevulinate: step 4/4. Catalyzes the decarboxylation of four acetate groups of uroporphyrinogen-III to yield coproporphyrinogen-III. The sequence is that of Uroporphyrinogen decarboxylase from Pseudomonas paraeruginosa (strain DSM 24068 / PA7) (Pseudomonas aeruginosa (strain PA7)).